The chain runs to 173 residues: NADH-quinone oxidoreductase subunit B 2 (173 aa).

[4Fe-4S] cluster is bound by residues Cys42, Cys43, Cys107, and Cys137.

This sequence belongs to the complex I 20 kDa subunit family. As to quaternary structure, NDH-1 is composed of 14 different subunits. Subunits NuoB, C, D, E, F, and G constitute the peripheral sector of the complex. [4Fe-4S] cluster serves as cofactor.

It localises to the cell inner membrane. The catalysed reaction is a quinone + NADH + 5 H(+)(in) = a quinol + NAD(+) + 4 H(+)(out). In terms of biological role, NDH-1 shuttles electrons from NADH, via FMN and iron-sulfur (Fe-S) centers, to quinones in the respiratory chain. Couples the redox reaction to proton translocation (for every two electrons transferred, four hydrogen ions are translocated across the cytoplasmic membrane), and thus conserves the redox energy in a proton gradient. The polypeptide is NADH-quinone oxidoreductase subunit B 2 (Anaeromyxobacter dehalogenans (strain 2CP-C)).